We begin with the raw amino-acid sequence, 271 residues long: Phosphatidylinositol transfer protein beta isoform (271 aa).

Residue lysine 215 is modified to N6-acetyllysine. Serine 262 carries the phosphoserine modification.

Belongs to the PtdIns transfer protein family. PI transfer class I subfamily. Post-translationally, constitutive phosphorylation of Ser-262 has no effect on phospholipid transfer activity but is required for Golgi targeting. Expressed abundantly in brain, kidney, liver, and lung, but in a lesser amount in testis.

Its subcellular location is the golgi apparatus. The protein resides in the golgi apparatus membrane. It is found in the endoplasmic reticulum membrane. The catalysed reaction is a 1,2-diacyl-sn-glycero-3-phosphocholine(in) = a 1,2-diacyl-sn-glycero-3-phosphocholine(out). It carries out the reaction a 1,2-diacyl-sn-glycero-3-phospho-(1D-myo-inositol)(in) = a 1,2-diacyl-sn-glycero-3-phospho-(1D-myo-inositol)(out). It catalyses the reaction an N-(acyl)-sphingosylphosphocholine(in) = an N-(acyl)-sphingosylphosphocholine(out). With respect to regulation, phosphatidylinositol transfer activity is inhibited by N-ethylmaleimide. Functionally, catalyzes the transfer of phosphatidylinositol between membranes. Also catalyzes the transfer of phosphatidylcholine and sphingomyelin between membranes. Required for COPI-mediated retrograde transport from the Golgi to the endoplasmic reticulum; phosphatidylinositol and phosphatidylcholine transfer activity is essential for this function. This is Phosphatidylinositol transfer protein beta isoform (Pitpnb) from Rattus norvegicus (Rat).